Reading from the N-terminus, the 288-residue chain is 4-diphosphocytidyl-2-C-methyl-D-erythritol kinase (288 aa).

K8 is a catalytic residue. ATP is bound at residue P90–S100. The active site involves D132.

It belongs to the GHMP kinase family. IspE subfamily.

It catalyses the reaction 4-CDP-2-C-methyl-D-erythritol + ATP = 4-CDP-2-C-methyl-D-erythritol 2-phosphate + ADP + H(+). It functions in the pathway isoprenoid biosynthesis; isopentenyl diphosphate biosynthesis via DXP pathway; isopentenyl diphosphate from 1-deoxy-D-xylulose 5-phosphate: step 3/6. In terms of biological role, catalyzes the phosphorylation of the position 2 hydroxy group of 4-diphosphocytidyl-2C-methyl-D-erythritol. This Chlamydia trachomatis serovar L2b (strain UCH-1/proctitis) protein is 4-diphosphocytidyl-2-C-methyl-D-erythritol kinase.